Here is a 352-residue protein sequence, read N- to C-terminus: Uroporphyrinogen decarboxylase (352 aa).

Residues 26–30 (RQAGR), F45, D76, Y153, S208, and H323 each bind substrate.

It belongs to the uroporphyrinogen decarboxylase family. In terms of assembly, homodimer.

It is found in the cytoplasm. It catalyses the reaction uroporphyrinogen III + 4 H(+) = coproporphyrinogen III + 4 CO2. It participates in porphyrin-containing compound metabolism; protoporphyrin-IX biosynthesis; coproporphyrinogen-III from 5-aminolevulinate: step 4/4. Its function is as follows. Catalyzes the decarboxylation of four acetate groups of uroporphyrinogen-III to yield coproporphyrinogen-III. The sequence is that of Uroporphyrinogen decarboxylase from Prochlorococcus marinus (strain MIT 9313).